We begin with the raw amino-acid sequence, 387 residues long: Gamma-butyrobetaine dioxygenase (387 aa).

4 residues coordinate Zn(2+): Cys-38, Cys-40, Cys-43, and His-82. Fe cation contacts are provided by His-202, Asp-204, and His-347. Ser-351 carries the phosphoserine modification.

This sequence belongs to the gamma-BBH/TMLD family. It depends on Fe(2+) as a cofactor. L-ascorbate serves as cofactor. In terms of tissue distribution, highly expressed in kidney; moderately expressed in liver; very low expression in brain.

Its subcellular location is the cytoplasm. It catalyses the reaction 4-(trimethylamino)butanoate + 2-oxoglutarate + O2 = carnitine + succinate + CO2. It participates in amine and polyamine biosynthesis; carnitine biosynthesis. Functionally, catalyzes the formation of L-carnitine from gamma-butyrobetaine. This is Gamma-butyrobetaine dioxygenase (BBOX1) from Homo sapiens (Human).